A 146-amino-acid chain; its full sequence is Hemoglobin subunit delta (146 aa).

A Globin domain is found at 2–146; that stretch reads HLTGDEKSAV…VATALAHKYH (145 aa). The residue at position 50 (S50) is a Phosphoserine. The heme b site is built by H63 and H92.

The protein belongs to the globin family. In terms of assembly, heterotetramer of two delta chains and two alpha chains. In terms of tissue distribution, red blood cells.

In Saimiri sciureus (Common squirrel monkey), this protein is Hemoglobin subunit delta (HBD).